The primary structure comprises 71 residues: Translation initiation factor IF-1 (71 aa).

Positions 1 to 71 constitute an S1-like domain; it reads MSKDDLIQFT…LTKGRVIHRH (71 aa).

The protein belongs to the IF-1 family. In terms of assembly, component of the 30S ribosomal translation pre-initiation complex which assembles on the 30S ribosome in the order IF-2 and IF-3, IF-1 and N-formylmethionyl-tRNA(fMet); mRNA recruitment can occur at any time during PIC assembly.

Its subcellular location is the cytoplasm. Its function is as follows. One of the essential components for the initiation of protein synthesis. Stabilizes the binding of IF-2 and IF-3 on the 30S subunit to which N-formylmethionyl-tRNA(fMet) subsequently binds. Helps modulate mRNA selection, yielding the 30S pre-initiation complex (PIC). Upon addition of the 50S ribosomal subunit IF-1, IF-2 and IF-3 are released leaving the mature 70S translation initiation complex. This is Translation initiation factor IF-1 from Rickettsia typhi (strain ATCC VR-144 / Wilmington).